The sequence spans 248 residues: 2,3-bisphosphoglycerate-dependent phosphoglycerate mutase (248 aa).

Substrate-binding positions include 8-15 (RHGESEWN), 21-22 (TG), arginine 60, 87-90 (ERHY), lysine 98, 114-115 (RR), and 183-184 (GN). Histidine 9 (tele-phosphohistidine intermediate) is an active-site residue. The Proton donor/acceptor role is filled by glutamate 87.

The protein belongs to the phosphoglycerate mutase family. BPG-dependent PGAM subfamily.

The enzyme catalyses (2R)-2-phosphoglycerate = (2R)-3-phosphoglycerate. It functions in the pathway carbohydrate degradation; glycolysis; pyruvate from D-glyceraldehyde 3-phosphate: step 3/5. In terms of biological role, catalyzes the interconversion of 2-phosphoglycerate and 3-phosphoglycerate. The polypeptide is 2,3-bisphosphoglycerate-dependent phosphoglycerate mutase (Coprothermobacter proteolyticus (strain ATCC 35245 / DSM 5265 / OCM 4 / BT)).